We begin with the raw amino-acid sequence, 254 residues long: 5'/3'-nucleotidase SurE (254 aa).

A divalent metal cation contacts are provided by Asp-9, Asp-10, Ser-40, and Asn-93.

It belongs to the SurE nucleotidase family. A divalent metal cation is required as a cofactor.

It localises to the cytoplasm. The enzyme catalyses a ribonucleoside 5'-phosphate + H2O = a ribonucleoside + phosphate. The catalysed reaction is a ribonucleoside 3'-phosphate + H2O = a ribonucleoside + phosphate. It catalyses the reaction [phosphate](n) + H2O = [phosphate](n-1) + phosphate + H(+). Nucleotidase with a broad substrate specificity as it can dephosphorylate various ribo- and deoxyribonucleoside 5'-monophosphates and ribonucleoside 3'-monophosphates with highest affinity to 3'-AMP. Also hydrolyzes polyphosphate (exopolyphosphatase activity) with the preference for short-chain-length substrates (P20-25). Might be involved in the regulation of dNTP and NTP pools, and in the turnover of 3'-mononucleotides produced by numerous intracellular RNases (T1, T2, and F) during the degradation of various RNAs. This chain is 5'/3'-nucleotidase SurE, found in Proteus mirabilis (strain HI4320).